The chain runs to 863 residues: Ubiquitin carboxyl-terminal hydrolase 13 (863 aa).

Residue serine 114 is modified to Phosphoserine. A Phosphothreonine modification is found at threonine 122. A UBP-type; degenerate zinc finger spans residues 187–295 (PVSKYANNLT…KHLAHFGIDM (109 aa)). The Zn(2+) site is built by cysteine 211, cysteine 214, cysteine 231, and histidine 244. Lysine 311 participates in a covalent cross-link: Glycyl lysine isopeptide (Lys-Gly) (interchain with G-Cter in SUMO2). One can recognise a USP domain in the interval 336-861 (TGLKNLGNSC…LGYMYFYRRI (526 aa)). The active-site Nucleophile is cysteine 345. A Glycyl lysine isopeptide (Lys-Gly) (interchain with G-Cter in SUMO2) cross-link involves residue lysine 405. UBA domains follow at residues 652-693 (DIDE…IVVH) and 727-767 (QPPE…IFSH). The active-site Proton acceptor is the histidine 823.

It belongs to the peptidase C19 family. Interacts with UFD1. Interacts (via UBA domains) with SIAH2 (when ubiquitinated). Interacts with BAG6; the interaction is direct and may mediate UBL4A deubiquitination. Interacts (via UBA 2 domain) with AMFR; the interaction is direct. Interacts with UBL4A; may be indirect via BAG6. Interacts with NEDD4.

It localises to the cytoplasm. It catalyses the reaction Thiol-dependent hydrolysis of ester, thioester, amide, peptide and isopeptide bonds formed by the C-terminal Gly of ubiquitin (a 76-residue protein attached to proteins as an intracellular targeting signal).. Its activity is regulated as follows. Specifically inhibited by spautin-1 (specific and potent autophagy inhibitor-1), a derivative of MBCQ that binds to USP13 and inhibits deubiquitinase activity. Regulated by PIK3C3/VPS34-containing complexes. The weak deubiquitinase activity in vitro suggests the existence of some mechanism that activates the enzyme. Deubiquitinase that mediates deubiquitination of target proteins such as BECN1, MITF, SKP2 and USP10 and is involved in various processes such as autophagy, endoplasmic reticulum-associated degradation (ERAD), cell cycle progression or DNA damage response. Component of a regulatory loop that controls autophagy and p53/TP53 levels: mediates deubiquitination of BECN1, a key regulator of autophagy, leading to stabilize the PIK3C3/VPS34-containing complexes. Alternatively, forms with NEDD4 a deubiquitination complex, which subsequently stabilizes VPS34 to promote autophagy. Also deubiquitinates USP10, an essential regulator of p53/TP53 stability. In turn, PIK3C3/VPS34-containing complexes regulate USP13 stability, suggesting the existence of a regulatory system by which PIK3C3/VPS34-containing complexes regulate p53/TP53 protein levels via USP10 and USP13. Recruited by nuclear UFD1 and mediates deubiquitination of SKP2, thereby regulating endoplasmic reticulum-associated degradation (ERAD). Also regulates ERAD through the deubiquitination of UBL4A a component of the BAG6/BAT3 complex. Mediates stabilization of SIAH2 independently of deubiquitinase activity: binds ubiquitinated SIAH2 and acts by impairing SIAH2 autoubiquitination. Regulates the cell cycle progression by stabilizing cell cycle proteins such as SKP2 and AURKB. In addition, plays an important role in maintaining genomic stability and in DNA replication checkpoint activation via regulation of RAP80 and TOPBP1. Deubiquitinates the multifunctional protein HMGB1 and subsequently drives its nucleocytoplasmic localization and its secretion. Positively regulates type I and type II interferon signalings by deubiquitinating STAT1 but negatively regulates antiviral response by deubiquitinating STING1. The sequence is that of Ubiquitin carboxyl-terminal hydrolase 13 (USP13) from Bos taurus (Bovine).